Consider the following 247-residue polypeptide: UPF0309 protein Lm4b_02611 (247 aa).

In terms of domain architecture, SIS spans 31-214 (VAESIENDGV…ETMVNDNFTP (184 aa)).

This sequence belongs to the UPF0309 family.

This is UPF0309 protein Lm4b_02611 from Listeria monocytogenes serotype 4b (strain CLIP80459).